We begin with the raw amino-acid sequence, 154 residues long: Transcriptional repressor NrdR (154 aa).

The segment at 3 to 34 (CPTCKYNGTRVVDSRPADDGNSIRRRRECEKC) is a zinc-finger region. Residues 49–139 (LIVVKKDGAR…VYRQFKDISV (91 aa)) form the ATP-cone domain.

This sequence belongs to the NrdR family. Zn(2+) is required as a cofactor.

Negatively regulates transcription of bacterial ribonucleotide reductase nrd genes and operons by binding to NrdR-boxes. The protein is Transcriptional repressor NrdR of Listeria innocua serovar 6a (strain ATCC BAA-680 / CLIP 11262).